Reading from the N-terminus, the 115-residue chain is Cell division topological specificity factor (115 aa).

The disordered stretch occupies residues 93 to 115 (QLKEPKNQSELDSPETEGTDQKS). Acidic residues predominate over residues 104–115 (DSPETEGTDQKS).

The protein belongs to the MinE family.

Functionally, prevents the cell division inhibition by proteins MinC and MinD at internal division sites while permitting inhibition at polar sites. This ensures cell division at the proper site by restricting the formation of a division septum at the midpoint of the long axis of the cell. This chain is Cell division topological specificity factor, found in Prochlorococcus marinus (strain NATL1A).